Here is a 498-residue protein sequence, read N- to C-terminus: NAD(P)H-quinone oxidoreductase chain 4, chloroplastic (498 aa).

14 helical membrane passes run 4 to 24 (FPWLTTVVILPIVGGSLIFLF), 31 to 51 (VIKWYTICICLIDLLITSYVF), 76 to 96 (FYWSFGIDGLSLGPILLTGFI), 113 to 130 (LFYFLMLAMYSGQIGTFS), 134 to 154 (ILLFFIMWEFELIPVYLLLSM), 167 to 187 (FILYTAGSSVFLLLGILGMSF), 208 to 228 (ALEIIFYIGFLIAFAVKSPII), 242 to 262 (HYSTCMLLAGILLKMGAYGLV), 272 to 292 (AHSIFSPWLILLGSIQIIYAA), 305 to 325 (IAYSSVSHMGFLLLGIGSISD), 330 to 350 (GAILQIISHGFIGAALFFLAG), 386 to 406 (LALPGMSGFVAELIVLLGIIT), 411 to 431 (LLITKILITFVTAIGMILTPI), and 463 to 483 (FISISILIPVISIGIYPDFIF).

It belongs to the complex I subunit 4 family.

The protein resides in the plastid. It localises to the chloroplast thylakoid membrane. The catalysed reaction is a plastoquinone + NADH + (n+1) H(+)(in) = a plastoquinol + NAD(+) + n H(+)(out). The enzyme catalyses a plastoquinone + NADPH + (n+1) H(+)(in) = a plastoquinol + NADP(+) + n H(+)(out). In Glycine max (Soybean), this protein is NAD(P)H-quinone oxidoreductase chain 4, chloroplastic.